Reading from the N-terminus, the 1417-residue chain is DNA-directed RNA polymerase subunit beta' (1417 aa).

Residues C68, C70, C83, and C86 each contribute to the Zn(2+) site. Mg(2+)-binding residues include D458, D460, and D462. Residues C811, C884, C891, and C894 each contribute to the Zn(2+) site.

This sequence belongs to the RNA polymerase beta' chain family. As to quaternary structure, the RNAP catalytic core consists of 2 alpha, 1 beta, 1 beta' and 1 omega subunit. When a sigma factor is associated with the core the holoenzyme is formed, which can initiate transcription. Mg(2+) is required as a cofactor. It depends on Zn(2+) as a cofactor.

It catalyses the reaction RNA(n) + a ribonucleoside 5'-triphosphate = RNA(n+1) + diphosphate. Functionally, DNA-dependent RNA polymerase catalyzes the transcription of DNA into RNA using the four ribonucleoside triphosphates as substrates. This Francisella tularensis subsp. mediasiatica (strain FSC147) protein is DNA-directed RNA polymerase subunit beta'.